The sequence spans 202 residues: Small ribosomal subunit protein uS4 (202 aa).

Positions 16–43 (GELPGLSRKTPRRAYPPGQHGQGRRKRS) are disordered. An S4 RNA-binding domain is found at 90 to 152 (MRLDNTVFRL…DNSRRMVETN (63 aa)).

It belongs to the universal ribosomal protein uS4 family. As to quaternary structure, part of the 30S ribosomal subunit. Contacts protein S5. The interaction surface between S4 and S5 is involved in control of translational fidelity.

Its function is as follows. One of the primary rRNA binding proteins, it binds directly to 16S rRNA where it nucleates assembly of the body of the 30S subunit. With S5 and S12 plays an important role in translational accuracy. This Crocosphaera subtropica (strain ATCC 51142 / BH68) (Cyanothece sp. (strain ATCC 51142)) protein is Small ribosomal subunit protein uS4.